The following is a 155-amino-acid chain: MGRFLFVSFGLLVVFLSLSGTAADCPSDWSSHEGHCYKFFQQKMNWADAERFCSEQAKGGHLVSFQSDGETDFVVNLVTEKIQSTDLYAWIGLRVQNKEKQCSSKWSDGSSVSYENVVGRTVKKCFALEKEQEFFVWINIYCGQQNPFVCKSPPP.

Positions 1 to 23 (MGRFLFVSFGLLVVFLSLSGTAA) are cleaved as a signal peptide. 3 disulfides stabilise this stretch: Cys25-Cys36, Cys53-Cys150, and Cys125-Cys142. The region spanning 32-151 (HEGHCYKFFQ…CGQQNPFVCK (120 aa)) is the C-type lectin domain.

The protein belongs to the snaclec family. Heterodimer of subunits alpha and beta; disulfide-linked. In terms of tissue distribution, expressed by the venom gland.

It localises to the secreted. In terms of biological role, this potent antithrombotic agent acts in a calcium-independent manner. Exerts its anticoagulant effect by two distinct mechanisms. It binds to activated thrombin through exosite 1, blocking fibrinogen clotting, platelet activation, factor V activation and other effects, and it interacts with prothrombin (F2), decreasing its proteolytic activation -especially in the presence of factor Va. In vivo, intravenous injection before thrombosis induction causes a significant decrease in thrombus weight. Furthermore, BJC shows a prolonged effect by remaining in the plasma bound to prothrombin for at least 12 hours. The polypeptide is Snaclec bothrojaracin subunit alpha (Bothrops jararaca (Jararaca)).